The sequence spans 458 residues: tRNA modification GTPase MnmE (458 aa).

Residues R26, E88, and R127 each contribute to the (6S)-5-formyl-5,6,7,8-tetrahydrofolate site. One can recognise a TrmE-type G domain in the interval 224–378; sequence GLSTAIIGRP…IEDRINQLFF (155 aa). Position 234 (N234) interacts with K(+). Residues 234-239, 253-259, and 278-281 contribute to the GTP site; these read NVGKSS, TDIAGTT, and DTAG. S238 serves as a coordination point for Mg(2+). Positions 253, 255, and 258 each coordinate K(+). T259 is a Mg(2+) binding site. A (6S)-5-formyl-5,6,7,8-tetrahydrofolate-binding site is contributed by K458.

The protein belongs to the TRAFAC class TrmE-Era-EngA-EngB-Septin-like GTPase superfamily. TrmE GTPase family. Homodimer. Heterotetramer of two MnmE and two MnmG subunits. Requires K(+) as cofactor.

It is found in the cytoplasm. Its function is as follows. Exhibits a very high intrinsic GTPase hydrolysis rate. Involved in the addition of a carboxymethylaminomethyl (cmnm) group at the wobble position (U34) of certain tRNAs, forming tRNA-cmnm(5)s(2)U34. The polypeptide is tRNA modification GTPase MnmE (Streptococcus pyogenes serotype M28 (strain MGAS6180)).